The chain runs to 766 residues: DNA ligase (766 aa).

The interval 1–30 (MSTVNAKGAKPATDANGQSLNPEEPSEALR) is disordered. NAD(+)-binding positions include 57 to 61 (DAEYD), 106 to 107 (SL), and Glu141. The active-site N6-AMP-lysine intermediate is the Lys143. NAD(+)-binding residues include Arg164, Glu201, Lys317, and Lys341. Zn(2+)-binding residues include Cys435, Cys438, Cys454, and Cys460. Positions 669-758 (STPRTLEGVT…PEAFGDRADA (90 aa)) constitute a BRCT domain. A disordered region spans residues 747–766 (QGPEAFGDRADAADQPAAGE).

This sequence belongs to the NAD-dependent DNA ligase family. LigA subfamily. Mg(2+) is required as a cofactor. Requires Mn(2+) as cofactor.

It carries out the reaction NAD(+) + (deoxyribonucleotide)n-3'-hydroxyl + 5'-phospho-(deoxyribonucleotide)m = (deoxyribonucleotide)n+m + AMP + beta-nicotinamide D-nucleotide.. DNA ligase that catalyzes the formation of phosphodiester linkages between 5'-phosphoryl and 3'-hydroxyl groups in double-stranded DNA using NAD as a coenzyme and as the energy source for the reaction. It is essential for DNA replication and repair of damaged DNA. The sequence is that of DNA ligase from Kocuria rhizophila (strain ATCC 9341 / DSM 348 / NBRC 103217 / DC2201).